The primary structure comprises 385 residues: Mitochondrial fission regulator 2 (385 aa).

An N-acetylserine modification is found at Ser-2. A Phosphoserine modification is found at Ser-119. The tract at residues 195–268 (SVDPDQLPGS…SHHSKSQRNK (74 aa)) is disordered. Residues 207 to 216 (SPPPPPPLPP) are compositionally biased toward pro residues. The span at 231–257 (PGSNNICDSDNPATEMSKQNPAANKTN) shows a compositional bias: polar residues. Ser-291 and Ser-328 each carry phosphoserine. Positions 331–363 (KENRSWESSPFSSPETSRFGHHISQSEGQRTKE) are disordered. A compositionally biased stretch (polar residues) spans 336-346 (WESSPFSSPET).

Belongs to the MTFR1 family.

The protein resides in the mitochondrion. In terms of biological role, may play a role in mitochondrial aerobic respiration essentially in the testis. Can also promote mitochondrial fission. This chain is Mitochondrial fission regulator 2 (MTFR2), found in Homo sapiens (Human).